The primary structure comprises 437 residues: Phosphomethylpyrimidine synthase (437 aa).

Substrate is bound by residues N69, M98, Y127, H163, 185 to 187 (SRG), 226 to 229 (DACR), and E265. H269 provides a ligand contact to Zn(2+). Residue Y292 coordinates substrate. Position 333 (H333) interacts with Zn(2+). Residues C409, C412, and C416 each coordinate [4Fe-4S] cluster.

The protein belongs to the ThiC family. The cofactor is [4Fe-4S] cluster.

The enzyme catalyses 5-amino-1-(5-phospho-beta-D-ribosyl)imidazole + S-adenosyl-L-methionine = 4-amino-2-methyl-5-(phosphooxymethyl)pyrimidine + CO + 5'-deoxyadenosine + formate + L-methionine + 3 H(+). Its pathway is cofactor biosynthesis; thiamine diphosphate biosynthesis. Catalyzes the synthesis of the hydroxymethylpyrimidine phosphate (HMP-P) moiety of thiamine from aminoimidazole ribotide (AIR) in a radical S-adenosyl-L-methionine (SAM)-dependent reaction. The sequence is that of Phosphomethylpyrimidine synthase from Alkaliphilus metalliredigens (strain QYMF).